The sequence spans 223 residues: Oxaloacetate tautomerase FAHD1, mitochondrial (223 aa).

A mitochondrion-targeting transit peptide spans 1–30; the sequence is MATSMIQRMFKQGTKIVCVGRNYAAHAKEL. The Mg(2+) site is built by Glu-67, Glu-69, and Asp-98.

The protein belongs to the FAH family. Mg(2+) is required as a cofactor. Requires Mn(2+) as cofactor.

It is found in the mitochondrion. It catalyses the reaction oxaloacetate = enol-oxaloacetate. Its function is as follows. Tautomerase that converts enol-oxaloacetate, a strong inhibitor of succinate dehydrogenase, to the physiological keto form of oxaloacetate. The protein is Oxaloacetate tautomerase FAHD1, mitochondrial of Arabidopsis thaliana (Mouse-ear cress).